The following is a 110-amino-acid chain: MEQFEHISVDQAYSLLQQEDSLAVLVDIRDPQSFGLAHPENAYHLTNDTMVELMNQVDFEQPVIVMCYHGISSQGAAQYLINQGFEAVYSLDGGFEAWRRQALPIIQQIG.

One can recognise a Rhodanese domain in the interval glutamate 19–glutamine 107. The Cysteine persulfide intermediate role is filled by cysteine 67.

It belongs to the GlpE family.

The protein localises to the cytoplasm. The enzyme catalyses thiosulfate + hydrogen cyanide = thiocyanate + sulfite + 2 H(+). It carries out the reaction thiosulfate + [thioredoxin]-dithiol = [thioredoxin]-disulfide + hydrogen sulfide + sulfite + 2 H(+). Its function is as follows. Transferase that catalyzes the transfer of sulfur from thiosulfate to thiophilic acceptors such as cyanide or dithiols. May function in a CysM-independent thiosulfate assimilation pathway by catalyzing the conversion of thiosulfate to sulfite, which can then be used for L-cysteine biosynthesis. The polypeptide is Thiosulfate sulfurtransferase GlpE (Photobacterium profundum (strain SS9)).